Consider the following 335-residue polypeptide: Leucine-rich repeat-containing protein 39 (335 aa).

Residues alanine 10–valine 47 adopt a coiled-coil conformation. 9 LRR repeats span residues glutamine 84–phenylalanine 105, asparagine 107–leucine 128, arginine 130–cysteine 151, serine 153–leucine 176, lysine 177–asparagine 197, alanine 200–methionine 221, asparagine 223–methionine 244, asparagine 246–methionine 267, and asparagine 269–glutamate 290.

As to quaternary structure, interacts with MYH7 (via C-terminus). In terms of tissue distribution, highly expressed in skeletal muscle and heart. Not detected in other tissues tested.

It localises to the cytoplasm. Its subcellular location is the myofibril. The protein resides in the sarcomere. It is found in the m line. Its function is as follows. Component of the sarcomeric M-band which plays a role in myocyte response to biomechanical stress. May regulate expression of other M-band proteins via an SRF-dependent pathway. Important for normal contractile function in heart. In Homo sapiens (Human), this protein is Leucine-rich repeat-containing protein 39 (LRRC39).